The sequence spans 1529 residues: ATP-dependent permease PDR15 (1529 aa).

The segment covering 1–13 (MSSDIRDVEERNS) has biased composition (basic and acidic residues). The segment at 1 to 38 (MSSDIRDVEERNSRSSSSSSSSNSAAQSIGQHPYRGFD) is disordered. The Cytoplasmic portion of the chain corresponds to 1–531 (MSSDIRDVEE…NFWRMKQSAS (531 aa)). Low complexity predominate over residues 14–24 (RSSSSSSSSNS). Positions 171–420 (LRLLKPSKEE…FQDMGYYCPP (250 aa)) constitute an ABC transporter 1 domain. Residues 532-552 (VTLWQVIGNSVMAFILGSMFY) traverse the membrane as a helical segment. The Extracellular segment spans residues 553 to 567 (KVMKKNDTSTFYFRG). The N-linked (GlcNAc...) asparagine glycan is linked to Asn558. Residues 568-588 (AAMFFAILFNAFSCLLEIFSL) form a helical membrane-spanning segment. The Cytoplasmic segment spans residues 589–617 (YETRPITEKHRTYSLYHPSADAFASVLSE). A helical membrane pass occupies residues 618 to 638 (MPPKLITAVCFNIIFYFLVDF). Topologically, residues 639 to 642 (RRNG) are extracellular. The helical transmembrane segment at 643-663 (GVFFFYFLINVIATFTLSHLF) threads the bilayer. Residues 664–699 (RCVGSLTKTLQEAMVPASMLLLAISMYTGFAIPKTK) are Cytoplasmic-facing. The helical transmembrane segment at 700–720 (ILGWSIWIWYINPLAYLFESL) threads the bilayer. The Extracellular segment spans residues 721 to 783 (MINEFHDRRF…YDYEHKHKWR (63 aa)). Asn744 carries N-linked (GlcNAc...) asparagine glycosylation. The helical transmembrane segment at 784–804 (GFGIGMAYVVFFFFVYLILCE) threads the bilayer. Over 805 to 1219 (YNEGAKQKGE…LFQQYWRSPD (415 aa)) the chain is Cytoplasmic. The span at 829–840 (EGKLQEKHRPGD) shows a compositional bias: basic and acidic residues. Positions 829–873 (EGKLQEKHRPGDIENNAGSSPDSATTEKKILDDSSEGSDSSSDNA) are disordered. In terms of domain architecture, ABC transporter 2 spans 884–1127 (FHWRDLCYDV…MIDYFESKGA (244 aa)). Residue 920–927 (GASGAGKT) participates in ATP binding. Residues 1220 to 1240 (YLWSKFILTIFNQVFIGFTFF) form a helical membrane-spanning segment. At 1241-1312 (KADRSLQGLQ…VEIPWNILAG (72 aa)) the chain is on the extracellular side. Residues 1313 to 1333 (TIAYCIYYYAVGFYANASAAG) form a helical membrane-spanning segment. Over 1334–1340 (QLHERGA) the chain is Cytoplasmic. A helical membrane pass occupies residues 1341–1361 (LFWLFSIAFYVYIGSMGLLMI). Residues 1362 to 1368 (SFNEVAE) are Extracellular-facing. The helical transmembrane segment at 1369–1389 (TAAHMGTLLFTMALSFCGVMA) threads the bilayer. The Cytoplasmic portion of the chain corresponds to 1390–1396 (TPKVMPR). A helical membrane pass occupies residues 1397–1417 (FWIFMYRVSPLTYMIDALLAL). Residues 1418–1492 (GVANVDVKCS…SSHYYRRWRN (75 aa)) lie on the Extracellular side of the membrane. A helical transmembrane segment spans residues 1493-1513 (YGIFICYIAFDYIAATFLYWL). Residues 1514 to 1529 (SRVPKKNGKISEKPKK) lie on the Cytoplasmic side of the membrane.

This sequence belongs to the ABC transporter superfamily. ABCG family. PDR (TC 3.A.1.205) subfamily.

It is found in the membrane. This is ATP-dependent permease PDR15 (PDR15) from Saccharomyces cerevisiae (strain ATCC 204508 / S288c) (Baker's yeast).